Here is a 610-residue protein sequence, read N- to C-terminus: Elongation factor 4 (610 aa).

In terms of domain architecture, tr-type G spans 11–193; it reads EKIRNFSIIA…QIVEKVPAPT (183 aa). GTP-binding positions include 23 to 28 and 140 to 143; these read DHGKST and NKID.

Belongs to the TRAFAC class translation factor GTPase superfamily. Classic translation factor GTPase family. LepA subfamily.

Its subcellular location is the cell membrane. It carries out the reaction GTP + H2O = GDP + phosphate + H(+). Its function is as follows. Required for accurate and efficient protein synthesis under certain stress conditions. May act as a fidelity factor of the translation reaction, by catalyzing a one-codon backward translocation of tRNAs on improperly translocated ribosomes. Back-translocation proceeds from a post-translocation (POST) complex to a pre-translocation (PRE) complex, thus giving elongation factor G a second chance to translocate the tRNAs correctly. Binds to ribosomes in a GTP-dependent manner. The polypeptide is Elongation factor 4 (Streptococcus pyogenes serotype M2 (strain MGAS10270)).